We begin with the raw amino-acid sequence, 347 residues long: Endophilin-A3 (347 aa).

Residues 1–21 (MSVAGLKKQFHKASQLFSEKI) are membrane-binding amphipathic helix. One can recognise a BAR domain in the interval 18–249 (SEKISGAEGT…LQMRISAASS (232 aa)). A required for dimerization upon membrane association region spans residues 60–87 (PNPAYRAKLGMLNTVSKIRGQVKTTGYP). The stretch at 181–201 (EEVRQAVEKFEESKELAERSM) forms a coiled coil. Residues 218–254 (FIEAALDYHRQSTEILQELQSKLQMRISAASSVPRRE) form an interaction with ARC region. The tract at residues 248–271 (SSVPRREYKPRPVKRSSSELNGVS) is disordered. At Ser-265 the chain carries Phosphoserine. One can recognise an SH3 domain in the interval 285 to 344 (MDQPCCRGLYDFEPENQGELGFKEGDIITLTNQIDENWYEGMIHGESGFFPINYVEVIVP).

The protein belongs to the endophilin family. In terms of assembly, interacts with ARC. Interacts with DNM1, SGIP1 and SYNJ1. Interacts with the huntingtin exon 1 protein (HDEX1P) containing a glutamine repeat in the pathological range and promotes formation of insoluble polyglutamine-containing aggregates in vivo. Interacts with DYDC1. Interacts with FASLG. Interacts with ATXN2. Interacts with BIN2. In terms of tissue distribution, brain and testis.

It is found in the cytoplasm. The protein localises to the early endosome membrane. Its function is as follows. Implicated in endocytosis. May recruit other proteins to membranes with high curvature. The sequence is that of Endophilin-A3 (SH3GL3) from Homo sapiens (Human).